Reading from the N-terminus, the 330-residue chain is Pre-mRNA-splicing factor 38 (330 aa).

Positions 182–330 are disordered; it reads SVLDEDLDDE…SRGERDRRRY (149 aa). Over residues 184-199 the composition is skewed to acidic residues; the sequence is LDEDLDDELPSDEEKA. The segment covering 213-224 has biased composition (basic residues); sequence RRPRRVRSKSRS. Residues 240–330 show a composition bias toward basic and acidic residues; that stretch reads RSRDYYDELE…SRGERDRRRY (91 aa).

It belongs to the PRP38 family. In terms of assembly, component of the spliceosome C complex. Interacts with Mfap1 (via C-terminus). Detected in all germal and follicle cells.

The protein localises to the nucleus. Functionally, required for pre-mRNA splicing. This is Pre-mRNA-splicing factor 38 from Drosophila melanogaster (Fruit fly).